The following is a 340-amino-acid chain: Annexin A2-A (340 aa).

Residues 2-25 (ALIHEILGKLSLEGNQSCARQSAL) are P10 binding site. 4 Annexin repeats span residues 34–105 (FDAE…GLIK), 106–177 (TRPQ…ALAK), 190–262 (EKID…NLVQ), and 266–337 (NKPL…NLCG).

The protein belongs to the annexin family. Tetramer of 2 light chains (p10 proteins) and 2 heavy chains (p36 proteins).

It is found in the secreted. The protein localises to the extracellular space. The protein resides in the extracellular matrix. Its subcellular location is the basement membrane. Calcium-regulated membrane-binding protein whose affinity for calcium is greatly enhanced by anionic phospholipids. It binds two calcium ions with high affinity. The polypeptide is Annexin A2-A (anxa2-a) (Xenopus laevis (African clawed frog)).